A 616-amino-acid polypeptide reads, in one-letter code: Dihydroxy-acid dehydratase (616 aa).

Asp-81 is a binding site for Mg(2+). Cys-122 lines the [2Fe-2S] cluster pocket. Mg(2+) contacts are provided by Asp-123 and Lys-124. At Lys-124 the chain carries N6-carboxylysine. Cys-195 contributes to the [2Fe-2S] cluster binding site. Residue Glu-491 participates in Mg(2+) binding. Ser-517 (proton acceptor) is an active-site residue.

This sequence belongs to the IlvD/Edd family. Homodimer. [2Fe-2S] cluster is required as a cofactor. The cofactor is Mg(2+).

It catalyses the reaction (2R)-2,3-dihydroxy-3-methylbutanoate = 3-methyl-2-oxobutanoate + H2O. It carries out the reaction (2R,3R)-2,3-dihydroxy-3-methylpentanoate = (S)-3-methyl-2-oxopentanoate + H2O. The protein operates within amino-acid biosynthesis; L-isoleucine biosynthesis; L-isoleucine from 2-oxobutanoate: step 3/4. Its pathway is amino-acid biosynthesis; L-valine biosynthesis; L-valine from pyruvate: step 3/4. Functionally, functions in the biosynthesis of branched-chain amino acids. Catalyzes the dehydration of (2R,3R)-2,3-dihydroxy-3-methylpentanoate (2,3-dihydroxy-3-methylvalerate) into 2-oxo-3-methylpentanoate (2-oxo-3-methylvalerate) and of (2R)-2,3-dihydroxy-3-methylbutanoate (2,3-dihydroxyisovalerate) into 2-oxo-3-methylbutanoate (2-oxoisovalerate), the penultimate precursor to L-isoleucine and L-valine, respectively. The chain is Dihydroxy-acid dehydratase from Escherichia coli O8 (strain IAI1).